The chain runs to 591 residues: Metalloendopeptidase OPG085 (591 aa).

Histidine 41 is a binding site for Zn(2+). Residue glutamate 44 is part of the active site. Residues histidine 45 and glutamate 112 each contribute to the Zn(2+) site.

Belongs to the peptidase M44 family. It depends on Zn(2+) as a cofactor. Undergoes proteolytic processing during the course of infection. May be cleaved into 46 kDa and 22 kDa products (Potential).

The protein localises to the virion. Probably involved in maturation of some viral proteins by processing them preferentially at Ala-Gly-|-Ser/Thr/Lys motifs. Does not seem to be responsible for the cleavage of major core proteins. This chain is Metalloendopeptidase OPG085 (OPG085), found in Variola virus (isolate Human/India/Ind3/1967) (VARV).